The chain runs to 665 residues: Dystrophia myotonica WD repeat-containing protein (665 aa).

Over residues 1–11 (MAAGGAEGGPG) the composition is skewed to gly residues. Disordered stretches follow at residues 1–91 (MAAG…PALP) and 100–119 (LGDPDGAGEPPSTPSGLGAG). The residue at position 2 (A2) is an N-acetylalanine. The segment covering 52-64 (PAPPQPTQPPPGP) has biased composition (pro residues). Positions 65 to 76 (AAASGPGAAGPA) are enriched in low complexity. The segment covering 77-89 (SSPPPAGPGPGPA) has biased composition (pro residues). 4 WD repeats span residues 208 to 248 (IDKT…TSTP), 279 to 318 (VGEGPLNEFAFSPDGRHLACVSQDGCLRVFHFDSMLLRGL), 321 to 360 (SYFGGLLCVCWSPDGRYVVTGGEDDLVTVWSFTEGRVVAR), and 363 to 445 (GHKS…LSPH). Disordered regions lie at residues 380-413 (AEEAASASADGDPSGEEEEPEVTSSDTGAPVSPL), 446-506 (PSLA…SMEP), 524-564 (RDRG…RSRL), and 628-665 (DEETEAQAGQASWPRSPSKSVVEGISSQPGSSPSGTVV). Over residues 450 to 491 (RTRTLPGTPGATPPASGSSRAGETGAGPLPRSLSRSNSLPHP) the composition is skewed to low complexity. S487 carries the post-translational modification Phosphoserine. R543 is modified (omega-N-methylarginine). The stretch at 592-629 (IAQERLTVLLFLEDCIITACQEGLICTWARPGKAFTDE) is one WD 5 repeat. Residues 634–646 (QAGQASWPRSPSK) are compositionally biased toward polar residues. Over residues 653-665 (SSQPGSSPSGTVV) the composition is skewed to low complexity.

As to quaternary structure, component of the USP12/DMWD/WDR48 deubiquitinating complex. Interacts with USP12; promotes its enzymatic activity. Interacts with USP46. Widely expressed in brain where it localizes to the olfactory bulb, forebrain, thalamus, hippocampus, cerebellum, cortex and hypothalamus (at protein level). Expression seems to be particularly strong in areas of high synaptic density such as the glomerular layer of the olfactory bulb, and mossy fiber terminal fields of the hippocampus (at protein level). Expressed in retina, with strongest expression in the external and internal plexiform layers (at protein level). Strongly expressed in brain and testis. Also detected at lower levels in heart, kidney, liver, lung, ovary, uterus, bladder and skeletal muscle. In testis, expression seems to be restricted to secondary spermatocytes.

Its subcellular location is the cytoplasm. The protein localises to the nucleus. The protein resides in the perikaryon. It is found in the cell projection. It localises to the dendrite. Regulator of the deubiquitinating USP12/DMWD/WDR48 complex. Functions as a cofactor that promotes USP12 enzymatic activity. In Mus musculus (Mouse), this protein is Dystrophia myotonica WD repeat-containing protein (Dmwd).